The sequence spans 888 residues: Interference hedgehog (888 aa).

A signal peptide spans 1–24 (MSLTRFSLCLLLTLLLAAIPVYLA). Residues 25 to 688 (SPDPGVRILR…SHNETFNLNP (664 aa)) lie on the Extracellular side of the membrane. Ig-like C2-type domains are found at residues 28–123 (PGVR…ARLE), 134–215 (EGFK…VRLA), 234–321 (PHLL…SIQL), and 327–414 (PRIV…LQVN). Intrachain disulfides connect C51-C106, C155-C203, and C257-C305. N-linked (GlcNAc...) asparagine glycosylation is found at N80, N185, N192, N281, N336, N365, N369, and N455. C348 and C396 are disulfide-bonded. Fibronectin type-III domains lie at 450–557 (PPSA…LQRG) and 565–660 (VPSL…TQRP). 2 residues coordinate heparin: R486 and K493. N-linked (GlcNAc...) asparagine glycosylation is present at N516. Position 531 (R531) interacts with heparin. N-linked (GlcNAc...) asparagine glycosylation occurs at N547. Residues 655 to 667 (GRTQRPRVSTTTE) show a composition bias toward polar residues. The interval 655-679 (GRTQRPRVSTTTEPAVHAMDTTTPS) is disordered. A glycan (N-linked (GlcNAc...) asparagine) is linked at N681. The chain crosses the membrane as a helical span at residues 689 to 709 (LLTGTIGGGALLVLLVVSACL). Over 710-888 (CLCRRRSSRG…SSGSLNSVGV (179 aa)) the chain is Cytoplasmic. Disordered stretches follow at residues 759 to 789 (AQQQ…DMSY), 812 to 864 (SSSL…PGRV), and 869 to 888 (ARLS…SVGV). Over residues 760–775 (QQQQQQQQQQQQQQQQ) the composition is skewed to low complexity. Positions 843–859 (QPTDGSTADSPRLQASN) are enriched in polar residues. Residues 872 to 888 (SSRSENLSSGSLNSVGV) show a composition bias toward low complexity.

It belongs to the immunoglobulin superfamily. IHOG family. In terms of assembly, homodimer. Heterotetramer; 2 iHog chains bind 2 hh chains when facilitated by heparin, heparin is required to promote high-affinity interactions between hh and iHog.

The protein localises to the membrane. Its function is as follows. Mediates response to the active Hedgehog (Hh) protein signal in embryos, functioning upstream or at the level of patched (ptc). In Drosophila grimshawi (Hawaiian fruit fly), this protein is Interference hedgehog.